We begin with the raw amino-acid sequence, 584 residues long: Interferon regulatory factor 2-binding protein 1 (584 aa).

Residues 59-120 form a disordered region; that stretch reads HVLPEGRSPG…RYDRATSSSR (62 aa). Ser66 carries the post-translational modification Phosphoserine. The span at 82–100 shows a compositional bias: low complexity; that stretch reads STGSQGSQLPPPQAQAQPS. Ser125 is subject to Phosphoserine. Position 177 is an omega-N-methylarginine (Arg177). Ser186 bears the Phosphoserine mark. A coiled-coil region spans residues 197-217; it reads EKEKQQRNADCLAELNEAMRG. A Glycyl lysine isopeptide (Lys-Gly) (interchain with G-Cter in SUMO2) cross-link involves residue Lys227. 2 disordered regions span residues 346–421 and 433–495; these read PAEA…GVPS and LGHS…GTGA. Positions 354 to 369 are enriched in pro residues; sequence YPEPAPAALCGPPPRA. A phosphoserine mark is found at Ser371, Ser384, Ser421, and Ser436. A Glycyl lysine isopeptide (Lys-Gly) (interchain with G-Cter in SUMO2) cross-link involves residue Lys438. Residues 449-458 are compositionally biased toward low complexity; that stretch reads AGGASPAASS. Ser453 and Ser457 each carry phosphoserine. The segment at 503-550 adopts an RING-type; degenerate zinc-finger fold; it reads CTLCRERLEDTHFVQCPSVPGHKFCFPCSREFIKAQGPAGEVYCPSGD. The tract at residues 503 to 550 is cys-rich; the sequence is CTLCRERLEDTHFVQCPSVPGHKFCFPCSREFIKAQGPAGEVYCPSGD.

Belongs to the IRF2BP family. As to quaternary structure, interacts with IRF2. Part of a corepressor complex containing IRF2 and IRF2BP2. Interacts with JDP2.

The protein resides in the nucleus. The catalysed reaction is S-ubiquitinyl-[E2 ubiquitin-conjugating enzyme]-L-cysteine + [acceptor protein]-L-lysine = [E2 ubiquitin-conjugating enzyme]-L-cysteine + N(6)-ubiquitinyl-[acceptor protein]-L-lysine.. Its function is as follows. Acts as a transcriptional corepressor in a IRF2-dependent manner; this repression is not mediated by histone deacetylase activities. May act as an E3 ligase towards JDP2, enhancing its polyubiquitination. Represses ATF2-dependent transcriptional activation. The chain is Interferon regulatory factor 2-binding protein 1 (Irf2bp1) from Mus musculus (Mouse).